Consider the following 209-residue polypeptide: Ribosomal RNA large subunit methyltransferase E (209 aa).

The S-adenosyl-L-methionine site is built by Gly63, Trp65, Asp83, Asp99, and Asp124. Lys164 acts as the Proton acceptor in catalysis.

This sequence belongs to the class I-like SAM-binding methyltransferase superfamily. RNA methyltransferase RlmE family.

The protein resides in the cytoplasm. The enzyme catalyses uridine(2552) in 23S rRNA + S-adenosyl-L-methionine = 2'-O-methyluridine(2552) in 23S rRNA + S-adenosyl-L-homocysteine + H(+). Functionally, specifically methylates the uridine in position 2552 of 23S rRNA at the 2'-O position of the ribose in the fully assembled 50S ribosomal subunit. The sequence is that of Ribosomal RNA large subunit methyltransferase E from Alkalilimnicola ehrlichii (strain ATCC BAA-1101 / DSM 17681 / MLHE-1).